We begin with the raw amino-acid sequence, 298 residues long: Inosose dehydratase (298 aa).

It belongs to the IolE/MocC family. It depends on glutathione as a cofactor. Co(2+) is required as a cofactor. Mn(2+) serves as cofactor.

The catalysed reaction is scyllo-inosose = 3D-3,5/4-trihydroxycyclohexane-1,2-dione + H2O. It participates in polyol metabolism; myo-inositol degradation into acetyl-CoA; acetyl-CoA from myo-inositol: step 2/7. In terms of biological role, catalyzes the dehydration of inosose (2-keto-myo-inositol, 2KMI or 2,4,6/3,5-pentahydroxycyclohexanone) to 3D-(3,5/4)-trihydroxycyclohexane-1,2-dione (D-2,3-diketo-4-deoxy-epi-inositol). This is Inosose dehydratase from Clostridium tetani (strain Massachusetts / E88).